The following is a 1482-amino-acid chain: Cystic fibrosis transmembrane conductance regulator (1482 aa).

The Cytoplasmic portion of the chain corresponds to methionine 1 to phenylalanine 77. A helical membrane pass occupies residues phenylalanine 78–glutamine 98. The ABC transmembrane type-1 1 domain occupies phenylalanine 81–leucine 365. Residues proline 99–tyrosine 122 are Extracellular-facing. A helical transmembrane segment spans residues leucine 123–histidine 146. The Cytoplasmic segment spans residues histidine 147–leucine 195. The helical transmembrane segment at alanine 196–tryptophan 216 threads the bilayer. Over glutamate 217–serine 222 the chain is Extracellular. A helical transmembrane segment spans residues alanine 223–methionine 243. Over methionine 244–lysine 298 the chain is Cytoplasmic. Residues alanine 299–phenylalanine 319 form a helical membrane-spanning segment. The Extracellular portion of the chain corresponds to leucine 320 to threonine 339. Residues isoleucine 340–valine 358 form a helical membrane-spanning segment. Residues glutamine 359–serine 859 lie on the Cytoplasmic side of the membrane. ATP is bound by residues tryptophan 401, serine 434, glycine 458–threonine 465, and glutamine 493. The ABC transporter 1 domain maps to asparagine 423–glycine 646. Cysteine 524 is lipidated: S-palmitoyl cysteine. A phosphoserine mark is found at serine 549 and serine 660. The segment at threonine 654–glutamate 832 is disordered R region. Serine 670 is subject to Phosphoserine; by PKA. The residue at position 686 (serine 686) is a Phosphoserine. A Glycyl lysine isopeptide (Lys-Gly) (interchain with G-Cter in ubiquitin) cross-link involves residue lysine 688. Phosphoserine is present on residues serine 700 and serine 712. A Phosphothreonine modification is found at threonine 717. Residues serine 737, serine 768, serine 791, serine 796, and serine 814 each carry the phosphoserine modification. A helical membrane pass occupies residues leucine 860–valine 880. The region spanning leucine 860–serine 1156 is the ABC transmembrane type-1 2 domain. At valine 881 to isoleucine 919 the chain is on the extracellular side. Asparagine 895 and asparagine 901 each carry an N-linked (GlcNAc...) asparagine glycan. Residues tyrosine 920 to histidine 940 form a discontinuously helical membrane-spanning segment. Over threonine 941–threonine 991 the chain is Cytoplasmic. A helical membrane pass occupies residues isoleucine 992–leucine 1012. Topologically, residues lysine 1013–proline 1014 are extracellular. The chain crosses the membrane as a helical span at residues tyrosine 1015–leucine 1035. Over histidine 1036 to threonine 1096 the chain is Cytoplasmic. A helical membrane pass occupies residues leucine 1097–phenylalanine 1117. Residues isoleucine 1118–glycine 1131 lie on the Extracellular side of the membrane. The chain crosses the membrane as a helical span at residues isoleucine 1132–isoleucine 1152. At aspartate 1153–leucine 1482 the chain is on the cytoplasmic side. One can recognise an ABC transporter 2 domain in the interval methionine 1212 to proline 1445. ATP contacts are provided by residues tyrosine 1221 and glycine 1246–serine 1253. The interval arginine 1388–leucine 1482 is interaction with GORASP2. Cysteine 1397 carries the S-palmitoyl cysteine lipid modification. A compositionally biased stretch (basic residues) spans histidine 1454 to serine 1464. The tract at residues histidine 1454 to leucine 1482 is disordered. Serine 1458 carries the post-translational modification Phosphoserine. The span at glutamate 1472–leucine 1482 shows a compositional bias: acidic residues. The PDZ-binding motif lies at threonine 1480–leucine 1482.

Belongs to the ABC transporter superfamily. ABCC family. CFTR transporter (TC 3.A.1.202) subfamily. In terms of assembly, monomer; does not require oligomerization for channel activity. May form oligomers in the membrane. Interacts with SLC26A3, SLC26A6 and NHERF1. Interacts with SHANK2. Interacts with MYO6. Interacts (via C-terminus) with GOPC (via PDZ domain); this promotes CFTR internalization and thereby decreases channel activity. Interacts with SLC4A7 through NHERF1. Found in a complex with MYO5B and RAB11A. Interacts with ANO1. Interacts with SLC26A8. Interacts with AHCYL1; the interaction increases CFTR activity. Interacts with CSE1L. The core-glycosylated form interacts with GORASP2 (via PDZ GRASP-type 1 domain) in respone to ER stress. Interacts with MARCHF2; the interaction leads to CFTR ubiqtuitination and degradation. Interacts with ADGRG2. N-glycosylated. Post-translationally, phosphorylated; cAMP treatment promotes phosphorylation and activates the channel. Dephosphorylation decreases the ATPase activity (in vitro). Phosphorylation at PKA sites activates the channel. Phosphorylation at PKC sites enhances the response to phosphorylation by PKA. Phosphorylated by AMPK; this inhibits channel activity. In terms of processing, ubiquitinated, leading to its degradation in the lysosome. Deubiquitination by USP10 in early endosomes enhances its endocytic recycling to the cell membrane. Ubiquitinated by RNF185 during ER stress. Ubiquitinated by MARCHF2.

The protein resides in the apical cell membrane. It is found in the early endosome membrane. The protein localises to the cell membrane. Its subcellular location is the recycling endosome membrane. It localises to the endoplasmic reticulum membrane. The protein resides in the nucleus. The enzyme catalyses ATP + H2O + closed Cl(-) channel = ADP + phosphate + open Cl(-) channel.. The catalysed reaction is chloride(in) = chloride(out). It catalyses the reaction hydrogencarbonate(in) = hydrogencarbonate(out). It carries out the reaction ATP + H2O = ADP + phosphate + H(+). In terms of biological role, epithelial ion channel that plays an important role in the regulation of epithelial ion and water transport and fluid homeostasis. Mediates the transport of chloride ions across the cell membrane. Possesses an intrinsic ATPase activity and utilizes ATP to gate its channel; the passive flow of anions through the channel is gated by cycles of ATP binding and hydrolysis by the ATP-binding domains. The ion channel is also permeable to HCO(3)(-); selectivity depends on the extracellular chloride concentration. Exerts its function also by modulating the activity of other ion channels and transporters. Contributes to the regulation of the pH and the ion content of the epithelial fluid layer. Modulates the activity of the epithelial sodium channel (ENaC) complex, in part by regulating the cell surface expression of the ENaC complex. May regulate bicarbonate secretion and salvage in epithelial cells by regulating the transporter SLC4A7. Can inhibit the chloride channel activity of ANO1. Plays a role in the chloride and bicarbonate homeostasis during sperm epididymal maturation and capacitation. This is Cystic fibrosis transmembrane conductance regulator from Sus scrofa (Pig).